The primary structure comprises 239 residues: UPF0641 membrane protein YHR140W (239 aa).

Residues 1-11 lie on the Cytoplasmic side of the membrane; that stretch reads MMSCLVPTRFT. The helical transmembrane segment at 12–31 threads the bilayer; it reads LTLNTACLLTSTWGFVRATS. The Lumenal segment spans residues 32-45; it reads VVLPPSLSKAGHKQ. A helical membrane pass occupies residues 46-66; it reads FLTIISIIATIINNAVNISNY. At 67-99 the chain is on the cytoplasmic side; sequence YIQRNNKMNLETKKKSDFISRHVTLPVSLVLES. Residues 100 to 120 traverse the membrane as a helical segment; that stretch reads IVATVYWPLRLFFVNLIMHGV. Over 121-125 the chain is Lumenal; it reads ESTAK. A helical transmembrane segment spans residues 126-146; that stretch reads TPFPMTVDMAIHLYPILYLLA. The Cytoplasmic portion of the chain corresponds to 147-162; it reads DHYLSGSGTKFKLSNK. The chain crosses the membrane as a helical span at residues 163 to 183; that stretch reads HAWLIVTSLAFSYFQYLAFLI. Residues 184-204 are Lumenal-facing; sequence DAGQGQAYPYPFLDVNEPYKS. The chain crosses the membrane as a helical span at residues 205 to 225; that stretch reads IIFVVVATITWAYYVFYQKFP. Over 226–239 the chain is Cytoplasmic; that stretch reads PKYIKKSAKKGDKN.

Belongs to the UPF0641 family.

Its subcellular location is the endoplasmic reticulum membrane. The sequence is that of UPF0641 membrane protein YHR140W from Saccharomyces cerevisiae (strain ATCC 204508 / S288c) (Baker's yeast).